The sequence spans 107 residues: Thioredoxin (107 aa).

One can recognise a Thioredoxin domain in the interval 2-107 (SVSQVTDASF…LESTLNKYIS (106 aa)). Catalysis depends on nucleophile residues cysteine 31 and cysteine 34. Cysteine 31 and cysteine 34 are disulfide-bonded.

Belongs to the thioredoxin family.

It localises to the plastid. The protein resides in the chloroplast. Functionally, participates in various redox reactions through the reversible oxidation of its active center dithiol to a disulfide and catalyzes dithiol-disulfide exchange reactions. In Porphyra purpurea (Red seaweed), this protein is Thioredoxin (trxA).